The following is a 156-amino-acid chain: Ribosome maturation factor RimP (156 aa).

The protein belongs to the RimP family.

Its subcellular location is the cytoplasm. In terms of biological role, required for maturation of 30S ribosomal subunits. This chain is Ribosome maturation factor RimP, found in Microcystis aeruginosa (strain NIES-843 / IAM M-2473).